A 357-amino-acid polypeptide reads, in one-letter code: Protein pelota homolog (357 aa).

Belongs to the eukaryotic release factor 1 family. Pelota subfamily. In terms of assembly, monomer. A divalent metal cation is required as a cofactor.

The protein resides in the cytoplasm. In terms of biological role, may function in recognizing stalled ribosomes, interact with stem-loop structures in stalled mRNA molecules, and effect endonucleolytic cleavage of the mRNA. May play a role in the release non-functional ribosomes and degradation of damaged mRNAs. Has endoribonuclease activity. This Thermococcus gammatolerans (strain DSM 15229 / JCM 11827 / EJ3) protein is Protein pelota homolog.